Consider the following 439-residue polypeptide: Niacin transporter NiaP (439 aa).

The next 12 helical transmembrane spans lie at 20–40 (LWVVGLGWMFDALDTGIIAFI), 57–77 (WIVSIGFIGMALGAVFSGGLA), 84–104 (TVFATTLLIYSLATAACAFAP), 108–128 (WLLAFRFIVGLGLGGQLPVAV), 143–163 (FIVLLESFWGLGWLVAALVSY), 169–189 (FGWHIAFLIGGLPAIYVYVII), 253–273 (LMLWLVWFGIVFSYYGIFTWL), 288–308 (FEYVLIMILAQLPGYISAAWL), 316–336 (ATLAGFIGACAISAYFFGQAD), 338–358 (VFNIMVWGCLLSFFNLGAWGV), 374–394 (FGAGWASAVGRMGGIAAPIVV), and 407–427 (VFMMFTLVLLAVAAVIVILGE).

It belongs to the major facilitator superfamily. Sugar transporter (TC 2.A.1.1) family.

The protein localises to the cell inner membrane. Its function is as follows. Functions as a high-affinity transporter of niacin (nicotinamide or nicotinate). Probably substantially contributes to niacin transport when its concentration in the medium is very low. This chain is Niacin transporter NiaP, found in Acinetobacter baylyi (strain ATCC 33305 / BD413 / ADP1).